Reading from the N-terminus, the 475-residue chain is Adenosylhomocysteinase (475 aa).

Residues Thr63, Asp138, and Glu199 each coordinate substrate. 200-202 (TTT) contacts NAD(+). Lys229 and Asp233 together coordinate substrate. Residues Asn234, 263-268 (GYGDVG), Glu286, Asn321, 342-344 (IGH), and Asn389 contribute to the NAD(+) site.

Belongs to the adenosylhomocysteinase family. NAD(+) serves as cofactor.

The protein resides in the cytoplasm. The enzyme catalyses S-adenosyl-L-homocysteine + H2O = L-homocysteine + adenosine. It participates in amino-acid biosynthesis; L-homocysteine biosynthesis; L-homocysteine from S-adenosyl-L-homocysteine: step 1/1. Functionally, may play a key role in the regulation of the intracellular concentration of adenosylhomocysteine. The polypeptide is Adenosylhomocysteinase (Solibacter usitatus (strain Ellin6076)).